An 83-amino-acid polypeptide reads, in one-letter code: Large ribosomal subunit protein bL27 (83 aa).

The segment at 1–20 (MAHKKGASSSRNGRDSNPQY) is disordered. Polar residues predominate over residues 7 to 19 (ASSSRNGRDSNPQ).

Belongs to the bacterial ribosomal protein bL27 family.

This is Large ribosomal subunit protein bL27 from Bifidobacterium animalis subsp. lactis (strain AD011).